A 101-amino-acid polypeptide reads, in one-letter code: uncharacterized protein (101 aa).

This is an uncharacterized protein from Escherichia coli O157:H7.